The following is a 307-amino-acid chain: UPF0749 protein MT1871 (307 aa).

An N-terminal signal peptide occupies residues 1 to 23 (MAESDRLLGGYDPNAGYSAHAGA). Transmembrane regions (helical) follow at residues 67–87 (VSWM…AAAV) and 152–172 (VLSL…VTVT).

It belongs to the UPF0749 family.

The protein localises to the cell membrane. The sequence is that of UPF0749 protein MT1871 from Mycobacterium tuberculosis (strain CDC 1551 / Oshkosh).